The following is a 675-amino-acid chain: Methionine--tRNA ligase (675 aa).

Positions 15 to 25 (PYANGSIHLGH) match the 'HIGH' region motif. 4 residues coordinate Zn(2+): Cys-146, Cys-149, Cys-159, and Cys-162. The 'KMSKS' region motif lies at 332–336 (KMSKS). Residue Lys-335 participates in ATP binding. Positions 573 to 675 (DFAKVDMRIA…SGAQPGMQVK (103 aa)) constitute a tRNA-binding domain.

The protein belongs to the class-I aminoacyl-tRNA synthetase family. MetG type 1 subfamily. As to quaternary structure, homodimer. It depends on Zn(2+) as a cofactor.

Its subcellular location is the cytoplasm. It carries out the reaction tRNA(Met) + L-methionine + ATP = L-methionyl-tRNA(Met) + AMP + diphosphate. Functionally, is required not only for elongation of protein synthesis but also for the initiation of all mRNA translation through initiator tRNA(fMet) aminoacylation. In Yersinia pseudotuberculosis serotype O:1b (strain IP 31758), this protein is Methionine--tRNA ligase.